Reading from the N-terminus, the 453-residue chain is GTPase Der (453 aa).

EngA-type G domains follow at residues 3 to 167 (PIIV…INSK) and 188 to 361 (VKIA…HTSQ). Residues 9-16 (GRTNVGKS), 57-61 (DTAGI), 119-122 (NKID), 194-201 (GKPNVGKS), 241-245 (DTAGM), and 306-309 (NKCD) each bind GTP. In terms of domain architecture, KH-like spans 362 to 446 (KKIKTSQVMK…PIKIQFKETM (85 aa)).

This sequence belongs to the TRAFAC class TrmE-Era-EngA-EngB-Septin-like GTPase superfamily. EngA (Der) GTPase family. Associates with the 50S ribosomal subunit.

GTPase that plays an essential role in the late steps of ribosome biogenesis. The protein is GTPase Der of Buchnera aphidicola subsp. Schizaphis graminum (strain Sg).